The sequence spans 1270 residues: MAVIKKGARRKDVKEPKKRSAKIKKATFDANKKKEVGVSDLTLLSKISDESINENLKKRFKNGIIYTYIGHVLISVNPFRDLGIYTNAVLESYKGKNRLEVPPHVFAIAESMYYNLKSYNENQCVIISGESGAGKTEAAKRIMQYIAAASNSHSESIGKIKDMVLATNPLLESFGCAKTLRNNNSSRHGKYLEIKFNSQFEPCAGNITNYLLEKQRVVSQIKNERNFHIFYQFTKGASDTYRQMFGVQMPEQYIYTAAAGCTTADTIDDVKDYEGTLEAMRTIGLVQEEQDQIFRMLAAILWIGNISFIENEEGNAQVGDTSVTDFVAYLLQVDASLLVKCLVERIMQTSHGMKRGSVYHVPLNPVQATAVRDALAKAIYNNLFDWIVDRVNVSLQAFPGADKSIGILDIYGFEIFEHNSFEQICINYVNEKLQQIFIQLTLKAEQETYEREKIKWTPIKYFDNKVVCDLIEAKNPPGILAAMNDSIATAHADSNAADQAFAQRLNLFNSNPYFELRANKFVIKHYAGDVTYDINGITDKNKDQLQKDLIELIGTTTNTFLSTIFPDDVDKDSKRRPPTAGDKIIKSANELVETLSKAEPSYIRTIKPNQTKSPNDYDDHQVLHQVKYLGLQENVRIRRAGFAYRQTFEKFVERFYLLSPDCSYAGDYTWDGDTLEAVKLILRDAMIPEKEFQLGVTSVFIKTPESLFALEDMRDKYWYNMAARIQRAWRRFLQRRIDAAIKIQRTIREKKGGNKYVKLRDYGTKLLAGKKERRSMSLLGYRAFMGDYLSCNESKTKGSYIRRQVGIKDKVVFSIKGECLHSKFGRSAQRLKKVFILTKKTFYIIGQTREQNAMKYTQDYKIDVGKIKQVSLTNLQDDWMGVILVNSTQPDPLINTPFKTELMTRLKKLNEKIMIKVGPTIEYHKQPNKLHTVRSKISDSAPKYGDIYKSSTIYVRRGHPANSKSNKKPKNPGGLSGKPIKSKKSKHKSTHKHTHSHRSHRDAAKKQPLPSQKPVNPLSLAATAAQAAYNPKPDKTVPIKSSAIPAAKVSSKHSSKPSSKEKVAVKKASSSHKSSSAKQNQVSMPPSKGVEKNKEPLKETTATANIPIPPPPPPMGQPKDPKFEAAYDFPGSGSSSELPLKKGDIVFISRDEPSGWSLAKLLDGSKEGWVPTAYMTPYKDTRNTVPVAATGAVNDVTNQKSSQIDNTISSAQEGVQFGSATVGPTSDNQSNPVGTFSDGLASALAARANKMRAESADDDDNDDGDDDDDW.

The segment at 1–20 (MAVIKKGARRKDVKEPKKRS) is disordered. The region spanning 36–715 (VGVSDLTLLS…SLFALEDMRD (680 aa)) is the Myosin motor domain. 129–136 (GESGAGKT) lines the ATP pocket. Serine 357 is subject to Phosphoserine. The tract at residues 404-486 (SIGILDIYGF…PGILAAMNDS (83 aa)) is actin-binding. 2 consecutive IQ domains span residues 719-739 (YNMA…RIDA) and 740-765 (AIKI…YGTK). The 191-residue stretch at 771–961 (KERRSMSLLG…TIYVRRGHPA (191 aa)) folds into the TH1 domain. 3 disordered regions span residues 951 to 1015 (STIY…QKPV), 1029 to 1136 (YNPK…GSSS), and 1215 to 1270 (VQFG…DDDW). Basic residues predominate over residues 980–1000 (IKSKKSKHKSTHKHTHSHRSH). The span at 1066-1078 (KKASSSHKSSSAK) shows a compositional bias: low complexity. Residues 1089-1098 (GVEKNKEPLK) are compositionally biased toward basic and acidic residues. Pro residues predominate over residues 1107–1116 (PIPPPPPPMG). The region spanning 1118-1180 (PKDPKFEAAY…PTAYMTPYKD (63 aa)) is the SH3 domain. Residues 1215-1234 (VQFGSATVGPTSDNQSNPVG) show a composition bias toward polar residues. Acidic residues predominate over residues 1256-1270 (ADDDDNDDGDDDDDW).

It belongs to the TRAFAC class myosin-kinesin ATPase superfamily. Myosin family. As to quaternary structure, interacts (via myosin motor domain) with SHE4; this interaction is important for proper localization and may regulate the interaction of the motor domain with actin. Interacts (via SH3 domain) with VRP1; this interaction is required for localization to sites of polarized growth and may regulate the interaction of the tail domain with actin. Interacts (via SH3 domain) with PAN1; this interaction is important for late stages of endocytopsis. Interacts (via SH3 domain) with BBC1 and LAS17. Interacts (via C-terminal acidic tail) with ARC19 and ARC40; ARC19 and ARC40 are Arp2/3 complex subunits. Post-translationally, phosphorylation of the TEDS site (Ser-357) is required for the polarization of the actin cytoskeleton and for ligand-induced, but not for constitutive internalization of STE2. Phosphorylation probably activates the myosin-I ATPase. Ser-357 is phosphorylated by CLA4 and STE20 in vitro.

The protein resides in the cytoplasm. The protein localises to the cytoskeleton. Its subcellular location is the actin patch. In terms of biological role, one of two redundant type-I myosins implicated in the organization of the actin cytoskeleton. Required for proper actin cytoskeleton polarization and for the internalization step in endocytosis. At the cell cortex, assembles in patch-like structures together with proteins from the actin-polymerizing machinery and promotes actin assembly. Functions redundantly with LAS17 as actin nucleation-promoting factor (NPF) for the Arp2/3 complex. Motor domain phosphorylation by PAK kinases CLA4 and STE20 promotes CDC42-regulated actin assembly. Functions together with the NPF PAN1 in late stages of endocytosis. Motor domain phosphorylation by PDK1 kinases PKH1 and PKH2, and by SGK kinases YPK1 and YPK2, promotes ligand-induced, but not constitutive endocytosis of the G protein-coupled receptor STE2. This chain is Myosin-3 (MYO3), found in Saccharomyces cerevisiae (strain YJM789) (Baker's yeast).